The following is a 207-amino-acid chain: Ras-related protein Rab-8A (207 aa).

Positions 17, 18, 19, 20, 21, 22, 23, 39, and 40 each coordinate GTP. Thr-22 is a Mg(2+) binding site. 2 consecutive short sequence motifs (switch) follow at residues Asp-31–Phe-45 and Asp-63–Gly-80. Mg(2+) contacts are provided by Thr-40 and Asp-63. Residues Gly-66, Asn-121, Lys-122, Asp-124, Ala-152, and Lys-153 each coordinate GTP. Cys-204 is subject to Cysteine methyl ester. The S-geranylgeranyl cysteine moiety is linked to residue Cys-204. A propeptide spans Val-205–Leu-207 (removed in mature form).

This sequence belongs to the small GTPase superfamily. Rab family. Requires Mg(2+) as cofactor.

It is found in the cell membrane. Its subcellular location is the golgi apparatus. The protein resides in the endosome membrane. The protein localises to the recycling endosome membrane. It localises to the cell projection. It is found in the cilium. Its subcellular location is the cytoplasmic vesicle. The protein resides in the phagosome membrane. The protein localises to the cytoplasm. It localises to the cytoskeleton. It is found in the microtubule organizing center. Its subcellular location is the centrosome. The protein resides in the centriole. The protein localises to the cilium basal body. It localises to the midbody. The enzyme catalyses GTP + H2O = GDP + phosphate + H(+). Regulated by guanine nucleotide exchange factors (GEFs) which promote the exchange of bound GDP for free GTP, GTPase activating proteins (GAPs) which increase the GTP hydrolysis activity, and GDP dissociation inhibitors (GDIs) which inhibit the dissociation of the nucleotide from the GTPase. Activated in response to insulin. In terms of biological role, the small GTPases Rab are key regulators of intracellular membrane trafficking, from the formation of transport vesicles to their fusion with membranes. Rabs cycle between an inactive GDP-bound form and an active GTP-bound form that is able to recruit to membranes different sets of downstream effectors directly responsible for vesicle formation, movement, tethering and fusion. RAB8A is involved in polarized vesicular trafficking and neurotransmitter release. Together with RAB11A, RAB3IP, the exocyst complex, PARD3, PRKCI, ANXA2, CDC42 and DNMBP promotes transcytosis of PODXL to the apical membrane initiation sites (AMIS), apical surface formation and lumenogenesis. Regulates the compacted morphology of the Golgi. Together with MYO5B and RAB11A participates in epithelial cell polarization. Also involved in membrane trafficking to the cilium and ciliogenesis. Together with MICALL2, may also regulate adherens junction assembly. May play a role in insulin-induced transport to the plasma membrane of the glucose transporter GLUT4 and therefore play a role in glucose homeostasis. Involved in autophagy. Participates in the export of a subset of neosynthesized proteins through a Rab8-Rab10-Rab11-dependent endososomal export route. Targeted to and stabilized on stressed lysosomes through LRRK2 phosphorylation. Suppresses stress-induced lysosomal enlargement through EHBP1 and EHNP1L1 effector proteins. The polypeptide is Ras-related protein Rab-8A (RAB8A) (Gallus gallus (Chicken)).